Consider the following 232-residue polypeptide: Ubiquinone biosynthesis O-methyltransferase (232 aa).

R36, G55, D76, and L120 together coordinate S-adenosyl-L-methionine.

The protein belongs to the methyltransferase superfamily. UbiG/COQ3 family.

It catalyses the reaction a 3-demethylubiquinol + S-adenosyl-L-methionine = a ubiquinol + S-adenosyl-L-homocysteine + H(+). It carries out the reaction a 3-(all-trans-polyprenyl)benzene-1,2-diol + S-adenosyl-L-methionine = a 2-methoxy-6-(all-trans-polyprenyl)phenol + S-adenosyl-L-homocysteine + H(+). It participates in cofactor biosynthesis; ubiquinone biosynthesis. O-methyltransferase that catalyzes the 2 O-methylation steps in the ubiquinone biosynthetic pathway. This Pseudomonas savastanoi pv. phaseolicola (strain 1448A / Race 6) (Pseudomonas syringae pv. phaseolicola (strain 1448A / Race 6)) protein is Ubiquinone biosynthesis O-methyltransferase.